A 689-amino-acid chain; its full sequence is Glycine--tRNA ligase beta subunit (689 aa).

This sequence belongs to the class-II aminoacyl-tRNA synthetase family. As to quaternary structure, tetramer of two alpha and two beta subunits.

It is found in the cytoplasm. It carries out the reaction tRNA(Gly) + glycine + ATP = glycyl-tRNA(Gly) + AMP + diphosphate. The polypeptide is Glycine--tRNA ligase beta subunit (Coxiella burnetii (strain RSA 331 / Henzerling II)).